The sequence spans 562 residues: Protein wntless (562 aa).

Residues 1–15 (MSGTILENLSGRKLS) lie on the Cytoplasmic side of the membrane. Residues 16 to 36 (ILVSSLMLCQVVCFLMGGLFA) traverse the membrane as a helical segment. The Lumenal segment spans residues 37 to 239 (PVPAGHQTVL…AIHQNGGFTQ (203 aa)). N-linked (GlcNAc...) asparagine glycosylation is found at asparagine 58 and asparagine 103. The helical transmembrane segment at 240-260 (VWLVLKTLLFPFVIGIMMWFW) threads the bilayer. The Cytoplasmic segment spans residues 261–275 (RRVHILQRSPALLEY). Residues 276 to 296 (MLFYLGGALSFLNLPLELLTL) traverse the membrane as a helical segment. Over 297–311 (GVEMPYMLLLSDVRQ) the chain is Lumenal. A helical membrane pass occupies residues 312 to 332 (GIFYAMLLSFWLVFAGEHMLI). The Cytoplasmic portion of the chain corresponds to 333 to 344 (QDSPSKSTIRSR). A helical membrane pass occupies residues 345 to 365 (YWKHLSAVVVGCISLFVFDIC). Topologically, residues 366–390 (ERGVQMRNPFYSIWTTPLGAKVAMS) are lumenal. Residues 391–411 (FIVLAGVSAAIYFLFLCFMVW) form a helical membrane-spanning segment. Topologically, residues 412 to 441 (KVFKDIGDKRTSLPSMSQARRLHYEGLIYR) are cytoplasmic. The helical transmembrane segment at 442-462 (FKFLMLATLLCAGLTVAGFIM) threads the bilayer. The Lumenal segment spans residues 463-482 (GQMAEGHWKWNENIEIQLTS). Residues 483–503 (AFLTGVYGMWNIYIFALIILY) form a helical membrane-spanning segment. Residues 504–562 (APSHKQWPTMRHSDETTQSNENIVASAASEEIEFSNLPSDSNPSEISSLTSFTRKVAFD) lie on the Cytoplasmic side of the membrane.

It belongs to the wntless family. In terms of assembly, interacts with wg; in the Golgi. Interacts with Vps35, a component of the retromer complex; wls stability is regulated by Vps35.

The protein localises to the presynaptic cell membrane. Its subcellular location is the postsynaptic cell membrane. It is found in the cell membrane. It localises to the endoplasmic reticulum membrane. The protein resides in the endosome membrane. The protein localises to the golgi apparatus membrane. In terms of biological role, a segment polarity gene required for wingless (wg)-dependent patterning processes, acting in both wg-sending cells and wg-target cells. In non-neuronal cells wls directs wg secretion. The wls traffic loop encompasses the Golgi, the cell surface, an endocytic compartment and a retrograde route leading back to the Golgi, and involves clathrin-mediated endocytosis and the retromer complex (a conserved protein complex consisting of Vps35 and Vps26). In neuronal cells (the larval motorneuron NMJ), the wg signal moves across the synapse via the release of wls-containing exosome-like vesicles. Postsynaptic wls is required for the trafficking of fz2 through the fz2-interacting protein Grip. In Drosophila grimshawi (Hawaiian fruit fly), this protein is Protein wntless.